Consider the following 438-residue polypeptide: Glutamate--tRNA ligase 2 (438 aa).

The short motif at 6–16 (PSPTGDMHTGN) is the 'HIGH' region element. Residues 231 to 235 (KMSKR) carry the 'KMSKS' region motif. Lys234 provides a ligand contact to ATP.

Belongs to the class-I aminoacyl-tRNA synthetase family. Glutamate--tRNA ligase type 1 subfamily. Monomer.

The protein resides in the cytoplasm. The enzyme catalyses tRNA(Glu) + L-glutamate + ATP = L-glutamyl-tRNA(Glu) + AMP + diphosphate. Functionally, catalyzes the attachment of glutamate to tRNA(Glu) in a two-step reaction: glutamate is first activated by ATP to form Glu-AMP and then transferred to the acceptor end of tRNA(Glu). This chain is Glutamate--tRNA ligase 2, found in Wolinella succinogenes (strain ATCC 29543 / DSM 1740 / CCUG 13145 / JCM 31913 / LMG 7466 / NCTC 11488 / FDC 602W) (Vibrio succinogenes).